Here is a 1294-residue protein sequence, read N- to C-terminus: Voltage-gated inwardly rectifying potassium channel KCNH2 (1294 aa).

The Cytoplasmic segment spans residues R1–Y377. The region spanning V15–H44 is the PAS domain. In terms of domain architecture, PAC spans R66–D118. Residues L207–S258 form a disordered region. Positions G211–T223 are enriched in pro residues. 2 positions are modified to phosphoserine: S212 and S216. Polar residues predominate over residues P232–R243. Phosphoserine occurs at positions 257, 258, 294, and 325. Residues S378–F398 traverse the membrane as a helical segment. Residues T399–Q424 are Extracellular-facing. Residues P425 to F445 form a helical membrane-spanning segment. Over R446–K469 the chain is Cytoplasmic. Residues G470–G490 form a helical membrane-spanning segment. At S491–L494 the chain is on the extracellular side. A helical; Voltage-sensor membrane pass occupies residues I495–R515. Residues Y516–A521 lie on the Cytoplasmic side of the membrane. A helical transmembrane segment spans residues A522–W542. At Y543 to Y585 the chain is on the extracellular side. Residues V586–P606 constitute an intramembrane region (pore-forming). The Selectivity filter signature appears at S598–N603. Residues N607–K612 are Extracellular-facing. A helical membrane pass occupies residues I613–V633. Over S634–Y1294 the chain is Cytoplasmic. The interval P716–L816 is cNMP-binding domain. The disordered stretch occupies residues G844–T956. A phosphoserine mark is found at S845 and S848. Over residues R857–R866 the composition is skewed to basic residues. The span at G902–E913 shows a compositional bias: low complexity. At R987 the chain carries Omega-N-methylarginine. Residues R1008–T1035 adopt a coiled-coil conformation. S1110 bears the Phosphoserine mark.

It belongs to the potassium channel family. H (Eag) (TC 1.A.1.20) subfamily. Kv11.1/KCNH2 sub-subfamily. As to quaternary structure, the potassium channel is probably composed of a homo- or heterotetrameric complex of pore-forming alpha subunits that can associate with modulating beta subunits. Interacts with DNAJB12 and DNAJB14; chaperones DNAJB12 and DNAJB14 promote tetramerization. Heteromultimer with KCNH6/ERG2 and KCNH7/ERG3. Interacts with ALG10B. Forms a stable complex with KCNE1 or KCNE2, and that this heteromultimerization regulates Inward rectifier potassium channel activity. Interacts with CANX. The core-glycosylated, but not the fully glycosylated form interacts with RNF207. Interacts with NDFIP1 and NDFIP2; this interaction decreases the cell membrane expression by targeting KCNH2, through interaction with NEDD4L, for the degradation through the multivesicular bodies (MVBs)-lysosomal pathway. Phosphorylated on serine and threonine residues. Phosphorylation by PKA inhibits ion conduction. Highly expressed in heart and brain.

It is found in the cell membrane. The enzyme catalyses K(+)(in) = K(+)(out). Functionally, pore-forming (alpha) subunit of voltage-gated inwardly rectifying potassium channel. Characterized by unusual gating kinetics by producing relatively small outward currents during membrane depolarization and large inward currents during subsequent repolarization which reflect a rapid inactivation during depolarization and quick recovery from inactivation but slow deactivation (closing) during repolarization. Channel properties are modulated by cAMP and subunit assembly. Forms a stable complex with KCNE1 or KCNE2, and that this heteromultimerization regulates inward rectifier potassium channel activity. The protein is Voltage-gated inwardly rectifying potassium channel KCNH2 of Cavia porcellus (Guinea pig).